Here is a 376-residue protein sequence, read N- to C-terminus: Queuine tRNA-ribosyltransferase (376 aa).

The active-site Proton acceptor is the aspartate 93. Residues 93–97, aspartate 147, glutamine 190, and glycine 217 each bind substrate; that span reads DSGGF. The segment at 248–254 is RNA binding; that stretch reads GVGTPDD. Residue aspartate 267 is the Nucleophile of the active site. Residues 272–276 are RNA binding; important for wobble base 34 recognition; it reads TRSGR.

The protein belongs to the queuine tRNA-ribosyltransferase family. As to quaternary structure, homodimer. Within each dimer, one monomer is responsible for RNA recognition and catalysis, while the other monomer binds to the replacement base PreQ1.

It catalyses the reaction 7-aminomethyl-7-carbaguanine + guanosine(34) in tRNA = 7-aminomethyl-7-carbaguanosine(34) in tRNA + guanine. Its pathway is tRNA modification; tRNA-queuosine biosynthesis. Functionally, catalyzes the base-exchange of a guanine (G) residue with the queuine precursor 7-aminomethyl-7-deazaguanine (PreQ1) at position 34 (anticodon wobble position) in tRNAs with GU(N) anticodons (tRNA-Asp, -Asn, -His and -Tyr). Catalysis occurs through a double-displacement mechanism. The nucleophile active site attacks the C1' of nucleotide 34 to detach the guanine base from the RNA, forming a covalent enzyme-RNA intermediate. The proton acceptor active site deprotonates the incoming PreQ1, allowing a nucleophilic attack on the C1' of the ribose to form the product. After dissociation, two additional enzymatic reactions on the tRNA convert PreQ1 to queuine (Q), resulting in the hypermodified nucleoside queuosine (7-(((4,5-cis-dihydroxy-2-cyclopenten-1-yl)amino)methyl)-7-deazaguanosine). In Agrobacterium fabrum (strain C58 / ATCC 33970) (Agrobacterium tumefaciens (strain C58)), this protein is Queuine tRNA-ribosyltransferase.